Reading from the N-terminus, the 69-residue chain is uncharacterized protein (69 aa).

Positions 10-64 constitute an HTH cro/C1-type domain; sequence IRAFRKLKGYTQEGFAKALGISVSILGEIERGNRLPSAAIIQDAADVLNISADEL. A DNA-binding region (H-T-H motif) is located at residues 21-40; sequence QEGFAKALGISVSILGEIER.

This is an uncharacterized protein from Bacillus subtilis (strain 168).